Reading from the N-terminus, the 362-residue chain is Probable aromatic amino acid hydroxylase (362 aa).

The Fe cation site is built by H200 and H205.

The protein belongs to the biopterin-dependent aromatic amino acid hydroxylase family. Fe(2+) serves as cofactor.

This is Probable aromatic amino acid hydroxylase from Chlamydia pneumoniae (Chlamydophila pneumoniae).